The primary structure comprises 120 residues: UPF0231 protein YacL (120 aa).

The protein belongs to the UPF0231 family.

This chain is UPF0231 protein YacL, found in Escherichia coli (strain SMS-3-5 / SECEC).